Here is a 180-residue protein sequence, read N- to C-terminus: NADH-quinone oxidoreductase subunit I (180 aa).

2 4Fe-4S ferredoxin-type domains span residues L44 to A74 and R90 to E119. [4Fe-4S] cluster is bound by residues C54, C57, C60, C64, C99, C102, C105, and C109. The segment at M145–R180 is disordered.

It belongs to the complex I 23 kDa subunit family. As to quaternary structure, NDH-1 is composed of 14 different subunits. Subunits NuoA, H, J, K, L, M, N constitute the membrane sector of the complex. Requires [4Fe-4S] cluster as cofactor.

The protein localises to the cell membrane. It carries out the reaction a quinone + NADH + 5 H(+)(in) = a quinol + NAD(+) + 4 H(+)(out). Functionally, NDH-1 shuttles electrons from NADH, via FMN and iron-sulfur (Fe-S) centers, to quinones in the respiratory chain. The immediate electron acceptor for the enzyme in this species is believed to be menaquinone. Couples the redox reaction to proton translocation (for every two electrons transferred, four hydrogen ions are translocated across the cytoplasmic membrane), and thus conserves the redox energy in a proton gradient. The sequence is that of NADH-quinone oxidoreductase subunit I from Mycolicibacterium smegmatis (strain ATCC 700084 / mc(2)155) (Mycobacterium smegmatis).